Reading from the N-terminus, the 343-residue chain is Probable xyloglucan endotransglucosylase/hydrolase protein 30 (343 aa).

Positions 1–23 (MSKSSYNHIFILILCLCLRSSSA) are cleaved as a signal peptide. In terms of domain architecture, GH16 spans 24–224 (FTNLNTLSFE…YKFAPFVAEF (201 aa)). Glutamate 109 (nucleophile) is an active-site residue. The active-site Proton donor is the glutamate 113. Residues glutamate 113 and 126-128 (QTN) contribute to the xyloglucan site. N-linked (GlcNAc...) asparagine glycosylation occurs at asparagine 132. Residues 136-140 (HRGRE), 203-204 (DW), glycine 208, and arginine 285 each bind xyloglucan. A disulfide bridge links cysteine 280 with cysteine 293. The tract at residues 306 to 343 (TGRLKFGGTEARERRRNRRQQRRPEIEIESDPDDRKLL) is disordered.

This sequence belongs to the glycosyl hydrolase 16 family. XTH group 3 subfamily. Post-translationally, contains at least one intrachain disulfide bond essential for its enzymatic activity. Predominantly expressed in green siliques.

The protein resides in the secreted. It localises to the cell wall. The protein localises to the extracellular space. Its subcellular location is the apoplast. It catalyses the reaction breaks a beta-(1-&gt;4) bond in the backbone of a xyloglucan and transfers the xyloglucanyl segment on to O-4 of the non-reducing terminal glucose residue of an acceptor, which can be a xyloglucan or an oligosaccharide of xyloglucan.. Catalyzes xyloglucan endohydrolysis (XEH) and/or endotransglycosylation (XET). Cleaves and religates xyloglucan polymers, an essential constituent of the primary cell wall, and thereby participates in cell wall construction of growing tissues. This is Probable xyloglucan endotransglucosylase/hydrolase protein 30 (XTH30) from Arabidopsis thaliana (Mouse-ear cress).